A 240-amino-acid chain; its full sequence is 4-hydroxy-tetrahydrodipicolinate reductase (240 aa).

Residues 79–81 (ATT) and 103–106 (SANM) contribute to the NAD(+) site. His135 functions as the Proton donor/acceptor in the catalytic mechanism. His136 is a binding site for (S)-2,3,4,5-tetrahydrodipicolinate. Lys139 functions as the Proton donor in the catalytic mechanism. Residue 145 to 146 (GT) participates in (S)-2,3,4,5-tetrahydrodipicolinate binding.

The protein belongs to the DapB family.

The protein localises to the cytoplasm. The enzyme catalyses (S)-2,3,4,5-tetrahydrodipicolinate + NAD(+) + H2O = (2S,4S)-4-hydroxy-2,3,4,5-tetrahydrodipicolinate + NADH + H(+). It carries out the reaction (S)-2,3,4,5-tetrahydrodipicolinate + NADP(+) + H2O = (2S,4S)-4-hydroxy-2,3,4,5-tetrahydrodipicolinate + NADPH + H(+). It functions in the pathway amino-acid biosynthesis; L-lysine biosynthesis via DAP pathway; (S)-tetrahydrodipicolinate from L-aspartate: step 4/4. Catalyzes the conversion of 4-hydroxy-tetrahydrodipicolinate (HTPA) to tetrahydrodipicolinate. This chain is 4-hydroxy-tetrahydrodipicolinate reductase, found in Staphylococcus aureus (strain Mu3 / ATCC 700698).